Reading from the N-terminus, the 287-residue chain is 2-dehydro-3-deoxyphosphooctonate aldolase (287 aa).

It belongs to the KdsA family.

It localises to the cytoplasm. The enzyme catalyses D-arabinose 5-phosphate + phosphoenolpyruvate + H2O = 3-deoxy-alpha-D-manno-2-octulosonate-8-phosphate + phosphate. It functions in the pathway carbohydrate biosynthesis; 3-deoxy-D-manno-octulosonate biosynthesis; 3-deoxy-D-manno-octulosonate from D-ribulose 5-phosphate: step 2/3. Its pathway is bacterial outer membrane biogenesis; lipopolysaccharide biosynthesis. This is 2-dehydro-3-deoxyphosphooctonate aldolase from Rhodopseudomonas palustris (strain BisB5).